The sequence spans 646 residues: MQLGLSVSDSDASPFTPLAVLELAHDTKAEAIAWLLNRIRDKQRNGGAELLVDQLLFPAQDGQKPNPNVFVVGSTLQRLLSGAEDVGLFKEFQDGTMRGFTYANRESFKDFEGDGEGFLGDAECQYIVKHELDTLRAKNEEYIPGYPKYKLYPGKSIVRRLQSKGVLVQYFPLHNKEDLKRLSFSWYKKIKLSFQPLDDIRSYFGEGLGLYFGFLEYFTFALIPMALIGIPYYLFDWEDYDKYVLFAVFNLVWSTVFLEVWKRCSATLAYSWGTLGRKKAFEEPRAGFHGPLGLNPVTGREEPIYPSSKRHLRIYLVSVPFVLLCLYLSFYVMMVYFDMEFWAISIYHENPNFATSVLLFVPSIIYAVVIEIMNLLYRYAAEFLTDWENHRLESSFQNHLVPKVLVFNFVNCFASLFYIAFVMQDMVLLRQSLATLLITSQILNQVMEAFLPYWLQRRRNKRVYKRMRRLMGDKELPLLEQIQLETEMNTYLGTFDDYLEQFLLFGYVSLFSCVHPLAAVLVVLNNITEVYSDAFKMCHVFKRPFSEPAANIGVWQLAFETMSIIAVVTNCALIALSPQVKAYFPESDAQLILTVVAIEHVLLAFKFILAFVIPDVPKHIQVKLSKLDFESLEALKKRKILEVAET.

8 helical membrane-spanning segments follow: residues 210-230 (LYFG…LIGI), 241-261 (DKYV…LEVW), 314-334 (IYLV…YVMM), 357-377 (VLLF…NLLY), 404-424 (VLVF…FVMQ), 502-522 (FLLF…AVLV), 557-577 (LAFE…IALS), and 592-612 (ILTV…LAFV).

It belongs to the anoctamin family.

It is found in the membrane. Does not exhibit calcium-activated chloride channel (CaCC) activity. Can inhibit the activity of ANO1. This chain is Anoctamin-10 (ano10), found in Danio rerio (Zebrafish).